We begin with the raw amino-acid sequence, 367 residues long: Anthranilate phosphoribosyltransferase (367 aa).

Positions 1-17 (MVLSSEASSAADHSAAA) are enriched in low complexity. The disordered stretch occupies residues 1–22 (MVLSSEASSAADHSAAAPIPTS). Residues Gly-104, 107–108 (GD), Thr-112, 114–117 (NLST), 132–140 (KHGNRAASS), and Gly-144 contribute to the 5-phospho-alpha-D-ribose 1-diphosphate site. Gly-104 is a binding site for anthranilate. Position 116 (Ser-116) interacts with Mg(2+). Residue Asn-135 participates in anthranilate binding. Residue Arg-190 coordinates anthranilate. Mg(2+)-binding residues include Asp-248 and Glu-249.

Belongs to the anthranilate phosphoribosyltransferase family. Homodimer. It depends on Mg(2+) as a cofactor.

The enzyme catalyses N-(5-phospho-beta-D-ribosyl)anthranilate + diphosphate = 5-phospho-alpha-D-ribose 1-diphosphate + anthranilate. Its pathway is amino-acid biosynthesis; L-tryptophan biosynthesis; L-tryptophan from chorismate: step 2/5. Its function is as follows. Catalyzes the transfer of the phosphoribosyl group of 5-phosphorylribose-1-pyrophosphate (PRPP) to anthranilate to yield N-(5'-phosphoribosyl)-anthranilate (PRA). This chain is Anthranilate phosphoribosyltransferase, found in Mycobacterium ulcerans (strain Agy99).